The chain runs to 1001 residues: Ankyrin repeat domain-containing protein 35 (1001 aa).

6 ANK repeats span residues 53–82 (NGQS…DINS), 86–115 (DGST…NEDA), 119–148 (ENRS…FLDV), 152–181 (DGRT…RVNV), 185–214 (NDKS…DAGA), and 218–247 (TGHD…RRRR). Disordered regions lie at residues 256–296 (PDLA…PCSE), 352–482 (PRAS…VAEP), and 559–601 (PEVP…ALGG). Over residues 281–295 (PEEEQEEKEDEDPCS) the composition is skewed to acidic residues. A coiled-coil region spans residues 295–344 (SEEWRWKYEEERRKVVRLEQELVQKTEECKTQAAAYLDLENQIREQAQEL). The span at 402-422 (KKAEDSAPGKIQYEVHGRSQP) shows a compositional bias: basic and acidic residues. The segment covering 423-434 (EEQGPPQSPASE) has biased composition (low complexity). Polar residues predominate over residues 440 to 450 (TGQQLTTNGAQ). The span at 579–588 (KQDEEKEKRV) shows a compositional bias: basic and acidic residues. Coiled-coil stretches lie at residues 610–696 (KGQL…LLAS), 733–810 (ISTL…IGKL), and 851–968 (QELK…HEEI). The disordered stretch occupies residues 879-902 (RRSGDLAAQAAEQERQASEMRGRS). Positions 890 to 902 (EQERQASEMRGRS) are enriched in basic and acidic residues.

This Homo sapiens (Human) protein is Ankyrin repeat domain-containing protein 35 (ANKRD35).